Here is a 66-residue protein sequence, read N- to C-terminus: Photosystem II reaction center protein H (66 aa).

The helical transmembrane segment at 27–47 threads the bilayer; the sequence is GAVPVMTVIGLLLLVFLVILL.

It belongs to the PsbH family. As to quaternary structure, PSII is composed of 1 copy each of membrane proteins PsbA, PsbB, PsbC, PsbD, PsbE, PsbF, PsbH, PsbI, PsbJ, PsbK, PsbL, PsbM, PsbT, PsbX, PsbY, Psb30/Ycf12, peripheral proteins PsbO, CyanoQ (PsbQ), PsbU, PsbV and a large number of cofactors. It forms dimeric complexes.

The protein resides in the cellular thylakoid membrane. One of the components of the core complex of photosystem II (PSII), required for its stability and/or assembly. PSII is a light-driven water:plastoquinone oxidoreductase that uses light energy to abstract electrons from H(2)O, generating O(2) and a proton gradient subsequently used for ATP formation. It consists of a core antenna complex that captures photons, and an electron transfer chain that converts photonic excitation into a charge separation. This chain is Photosystem II reaction center protein H, found in Prochlorococcus marinus (strain MIT 9215).